Here is a 617-residue protein sequence, read N- to C-terminus: Protein fem-1 homolog A (617 aa).

7 ANK repeats span residues 2 to 32 (DISA…EERA), 40 to 70 (EGGT…NVAL), 82 to 111 (EGAP…PVNN), 115 to 144 (TNST…DLEV), 148 to 177 (HGHT…DVNR), 181 to 210 (KGNT…RMER), and 213 to 242 (YGMT…ASRE). 2 TPR repeats span residues 245-279 (IHAL…RWAG) and 339-372 (SYYI…QQSN). 2 ANK repeats span residues 482-524 (GGHT…DVDS) and 528-557 (DNNT…HFDA).

It belongs to the fem-1 family. In terms of assembly, component of a CRL2 E3 ubiquitin-protein ligase complex, also named ECS (Elongin BC-CUL2/5-SOCS-box protein) complex.

It localises to the mitochondrion. The protein localises to the cytoplasm. It functions in the pathway protein modification; protein ubiquitination. In terms of biological role, substrate-recognition component of a Cul2-RING (CRL2) E3 ubiquitin-protein ligase complex of the DesCEND (destruction via C-end degrons) pathway, which recognizes a C-degron located at the extreme C terminus of target proteins, leading to their ubiquitination and degradation. The C-degron recognized by the DesCEND pathway is usually a motif of less than ten residues and can be present in full-length proteins, truncated proteins or proteolytically cleaved forms. The CRL2(FEM1A) complex specifically recognizes proteins with an arginine at the C-terminus: recognizes and binds proteins ending with -Lys/Arg-Xaa-Arg and -Lys/Arg-Xaa-Xaa-Arg C-degrons, leading to their ubiquitination and degradation. This chain is Protein fem-1 homolog A, found in Danio rerio (Zebrafish).